The primary structure comprises 383 residues: Methenyltetrahydrofolate synthase domain-containing protein (383 aa).

The interval 249-301 is disordered; sequence AGKDVTLQGEHQHLPEPGCQQTVPLSVGRRPPDTPGPETNSMEAAPGSPPGEG. The RRM domain occupies 306 to 379; the sequence is ADVYVGNLPG…DTLRVALARQ (74 aa).

This is Methenyltetrahydrofolate synthase domain-containing protein (MTHFSD) from Homo sapiens (Human).